The sequence spans 619 residues: Chaperone protein HscA homolog (619 aa).

This sequence belongs to the heat shock protein 70 family.

In terms of biological role, chaperone involved in the maturation of iron-sulfur cluster-containing proteins. Has a low intrinsic ATPase activity which is markedly stimulated by HscB. The chain is Chaperone protein HscA homolog from Acinetobacter baumannii (strain ACICU).